The following is a 601-amino-acid chain: Proteasome-associated ATPase (601 aa).

A compositionally biased stretch (gly residues) spans 1–15 (MSGPRSGSGSGGSTG). Residues 1-29 (MSGPRSGSGSGGSTGRPGDADSQRSAYEK) form a disordered region. A compositionally biased stretch (basic and acidic residues) spans 18-29 (GDADSQRSAYEK). Positions 19–106 (DADSQRSAYE…LKEEVDRLAQ (88 aa)) form a coiled coil. Residue 289 to 294 (GCGKTL) coordinates ATP. Positions 600–601 (YL) are docks into pockets in the proteasome alpha-ring.

The protein belongs to the AAA ATPase family. In terms of assembly, homohexamer. Assembles into a hexameric ring structure that caps the 20S proteasome core. Strongly interacts with the prokaryotic ubiquitin-like protein Pup through a hydrophobic interface; the interacting region of ARC lies in its N-terminal coiled-coil domain. There is one Pup binding site per ARC hexamer ring. Upon ATP-binding, the C-terminus of ARC interacts with the alpha-rings of the proteasome core, possibly by binding to the intersubunit pockets.

Its pathway is protein degradation; proteasomal Pup-dependent pathway. Its function is as follows. ATPase which is responsible for recognizing, binding, unfolding and translocation of pupylated proteins into the bacterial 20S proteasome core particle. May be essential for opening the gate of the 20S proteasome via an interaction with its C-terminus, thereby allowing substrate entry and access to the site of proteolysis. Thus, the C-termini of the proteasomal ATPase may function like a 'key in a lock' to induce gate opening and therefore regulate proteolysis. The chain is Proteasome-associated ATPase from Parafrankia sp. (strain EAN1pec).